Reading from the N-terminus, the 84-residue chain is Perlustrin (84 aa).

Residues 1–82 (LSCASCENAA…LDFKGVCARV (82 aa)) enclose the IGFBP N-terminal domain. Disulfide bonds link Cys3–Cys28, Cys6–Cys30, Cys11–Cys31, Cys18–Cys34, Cys42–Cys55, and Cys49–Cys79.

In terms of tissue distribution, shell.

In terms of biological role, binds human IGF1 and IGF2 and bovine insulin. This chain is Perlustrin, found in Haliotis laevigata (Smooth Australian abalone).